The primary structure comprises 222 residues: Superoxide dismutase [Cu-Zn], chloroplastic (222 aa).

Residues 1 to 68 constitute a chloroplast transit peptide; it reads MAAHTILASA…AASKPLTIVA (68 aa). Residues histidine 114, histidine 116, and histidine 131 each coordinate Cu cation. Residues cysteine 125 and cysteine 214 are joined by a disulfide bond. Zn(2+) is bound by residues histidine 131, histidine 139, histidine 148, and aspartate 151. Histidine 188 contacts Cu cation.

The protein belongs to the Cu-Zn superoxide dismutase family. In terms of assembly, homotetramer. The cofactor is Cu cation. Requires Zn(2+) as cofactor.

The protein resides in the plastid. Its subcellular location is the chloroplast. The enzyme catalyses 2 superoxide + 2 H(+) = H2O2 + O2. Destroys radicals which are normally produced within the cells and which are toxic to biological systems. This is Superoxide dismutase [Cu-Zn], chloroplastic (SODCP) from Spinacia oleracea (Spinach).